Here is a 132-residue protein sequence, read N- to C-terminus: Fatty acid-binding protein, liver (132 aa).

Position 1 is an N-acetylvaline (Val1). Tyr19 is modified (phosphotyrosine; by Tyr-kinases).

Belongs to the calycin superfamily. Fatty-acid binding protein (FABP) family.

The protein resides in the cytoplasm. FABPs are thought to play a role in the intracellular transport of long-chain fatty acids and their acyl-CoA esters. The polypeptide is Fatty acid-binding protein, liver (Ginglymostoma cirratum (Nurse shark)).